Here is an 82-residue protein sequence, read N- to C-terminus: M-theraphotoxin-Gr1a (82 aa).

The first 21 residues, 1 to 21, serve as a signal peptide directing secretion; it reads MKTSVVFVIAGLALLSVVCYA. Residues 22 to 46 constitute a propeptide that is removed on maturation; the sequence is SELKEQSSVNEVLSTIFHFEQPEER. 3 disulfides stabilise this stretch: Cys48/Cys63, Cys55/Cys69, and Cys62/Cys76. Phe80 carries the phenylalanine amide modification.

This sequence belongs to the neurotoxin 10 (Hwtx-1) family. 52 (MTx4) subfamily. As to expression, expressed by the venom gland.

Its subcellular location is the secreted. In terms of biological role, this cationic hydrophobic peptide acts on a lot of different channels and has an antimicrobial activity. It blocks mechanosensitive ion channels (also named stretch-activated channels or SACs), without having effect on whole-cell voltage-sensitive currents. It also affects acetylcholine receptors (nAChRs) through interactions with membrane lipids by prolonging the closing time without affecting channel conductance or opening activity. It shows high affinity for lipid bilayers. It acts by partitioning into the membrane and perturbing the interface between the channel and the lipid bilayer without necessarily being in physical contact with the channel. It inhibits atrial fibrillation as well as the membrane motor of outer hair cells at low doses. It also binds to the voltage sensor of voltage-gated potassium channels from the archaebacterium Aeropyrum pernix (KvAP) without affecting channel gating. It also shows a low inhibition on a large spectra of sodium channels (Nav1.1/SCN1A, Nav1.2/SCN2A, Nav1.3/SCN3A, Nav1.4/SCN4A, Nav1.5/SCN5A, Nav1.6/SCN8A, Nav1.7/SCN9A) (IC(50)=7.4-14 uM), and potassium channels Kv11.1/KCNH2 and Kv11.2/KCNH6 (IC(50)=11 uM for both). It exhibits antimicrobial activities against the Gram-positive bacteria B.subtilis (MIC=0.5 uM), S.aureus (MIC=2-4 uM), and S.epidermidis (MIC=4-8 uM), and Gram-negative bacteria S.typhimurium (MIC=32.64 uM), P.aeruginosa (MIC=8-16 uM), and E.coli (MIC=8-16 uM). This chain is M-theraphotoxin-Gr1a, found in Grammostola rosea (Chilean rose tarantula).